Reading from the N-terminus, the 227-residue chain is NAD(P)H-quinone oxidoreductase subunit K, chloroplastic (227 aa).

Positions 43, 44, 108, and 139 each coordinate [4Fe-4S] cluster.

Belongs to the complex I 20 kDa subunit family. In terms of assembly, NDH is composed of at least 16 different subunits, 5 of which are encoded in the nucleus. [4Fe-4S] cluster is required as a cofactor.

It localises to the plastid. The protein localises to the chloroplast thylakoid membrane. The enzyme catalyses a plastoquinone + NADH + (n+1) H(+)(in) = a plastoquinol + NAD(+) + n H(+)(out). It carries out the reaction a plastoquinone + NADPH + (n+1) H(+)(in) = a plastoquinol + NADP(+) + n H(+)(out). Functionally, NDH shuttles electrons from NAD(P)H:plastoquinone, via FMN and iron-sulfur (Fe-S) centers, to quinones in the photosynthetic chain and possibly in a chloroplast respiratory chain. The immediate electron acceptor for the enzyme in this species is believed to be plastoquinone. Couples the redox reaction to proton translocation, and thus conserves the redox energy in a proton gradient. This is NAD(P)H-quinone oxidoreductase subunit K, chloroplastic from Citrus sinensis (Sweet orange).